Here is a 438-residue protein sequence, read N- to C-terminus: tRNA(Ile)-lysidine synthase (438 aa).

26 to 31 (SGGADS) contributes to the ATP binding site.

It belongs to the tRNA(Ile)-lysidine synthase family.

The protein resides in the cytoplasm. It catalyses the reaction cytidine(34) in tRNA(Ile2) + L-lysine + ATP = lysidine(34) in tRNA(Ile2) + AMP + diphosphate + H(+). Ligates lysine onto the cytidine present at position 34 of the AUA codon-specific tRNA(Ile) that contains the anticodon CAU, in an ATP-dependent manner. Cytidine is converted to lysidine, thus changing the amino acid specificity of the tRNA from methionine to isoleucine. The polypeptide is tRNA(Ile)-lysidine synthase (Parabacteroides distasonis (strain ATCC 8503 / DSM 20701 / CIP 104284 / JCM 5825 / NCTC 11152)).